Reading from the N-terminus, the 363-residue chain is DNA replication and repair protein RecF (363 aa).

30–37 serves as a coordination point for ATP; it reads GSNGSGKT.

Belongs to the RecF family.

The protein resides in the cytoplasm. Functionally, the RecF protein is involved in DNA metabolism; it is required for DNA replication and normal SOS inducibility. RecF binds preferentially to single-stranded, linear DNA. It also seems to bind ATP. This Photorhabdus laumondii subsp. laumondii (strain DSM 15139 / CIP 105565 / TT01) (Photorhabdus luminescens subsp. laumondii) protein is DNA replication and repair protein RecF.